Consider the following 1160-residue polypeptide: ATP-dependent helicase/deoxyribonuclease subunit B (1160 aa).

It belongs to the helicase family. AddB/RexB type 2 subfamily. Heterodimer of AddA and RexB. Mg(2+) serves as cofactor.

The heterodimer acts as both an ATP-dependent DNA helicase and an ATP-dependent, dual-direction single-stranded exonuclease. Recognizes the chi site generating a DNA molecule suitable for the initiation of homologous recombination. This subunit has 5' -&gt; 3' nuclease activity but not helicase activity. The chain is ATP-dependent helicase/deoxyribonuclease subunit B from Lactobacillus helveticus (strain DPC 4571).